The chain runs to 377 residues: Signal peptide peptidase (377 aa).

Residues 1-27 (MDSALSDPHNGSAEAGGPTNSTTRPPS) are disordered. Residues 1 to 31 (MDSALSDPHNGSAEAGGPTNSTTRPPSTPEG) lie on the Lumenal side of the membrane. Residues Asn-10 and Asn-20 are each glycosylated (N-linked (GlcNAc...) asparagine). A helical transmembrane segment spans residues 32–52 (IALAYGSLLLMALLPIFFGAL). Residues 53–77 (RSVRCARGKNASDMPETITSRDAAR) lie on the Cytoplasmic side of the membrane. A helical transmembrane segment spans residues 78–98 (FPIIASCTLLGLYLFFKIFSQ). The Lumenal portion of the chain corresponds to 99 to 100 (EY). The helical transmembrane segment at 101–121 (INLLLSMYFFVLGILALSHTI) threads the bilayer. The Cytoplasmic portion of the chain corresponds to 122–157 (SPFMNKFFPASFPNRQYQLLFTQGSGENKEEIINYE). Residues 158–178 (FDTKDLVCLGLSSIVGVWYLL) form a helical membrane-spanning segment. Residues 179-181 (RKH) lie on the Lumenal side of the membrane. The chain crosses the membrane as a helical span at residues 182 to 202 (WIANNLFGLAFSLNGVELLHL). Over 203–209 (NNVSTGC) the chain is Cytoplasmic. Residues 210 to 230 (ILLGGLFIYDVFWVFGTNVMV) traverse the membrane as a helical segment. Residue Asp-219 is part of the active site. Residues 231–256 (TVAKSFEAPIKLVFPQDLLEKGLEAN) are Lumenal-facing. A helical transmembrane segment spans residues 257-277 (NFAMLGLGDVVIPGIFIALLL). Residue Asp-265 is part of the active site. The Cytoplasmic portion of the chain corresponds to 278–290 (RFDISLKKNTHTY). Residues 291–311 (FYTSFAAYIFGLGLTIFIMHI) traverse the membrane as a helical segment. The Lumenal portion of the chain corresponds to 312–314 (FKH). Residues 315-335 (AQPALLYLVPACIGFPVLVAL) traverse the membrane as a helical segment. The short motif at 317–319 (PAL) is the PAL element. The Cytoplasmic portion of the chain corresponds to 336 to 377 (AKGEVTEMFSYEESNPKDPAAVTESKEGTEASASKGLEKKEK). The disordered stretch occupies residues 345–377 (SYEESNPKDPAAVTESKEGTEASASKGLEKKEK). At Ser-367 the chain carries Phosphoserine.

Belongs to the peptidase A22B family. As to quaternary structure, monomer. Homodimer. Interacts with RNF139. Interacts with DERL1 and XBP1 isoform 1. In terms of processing, N-glycosylated. In terms of tissue distribution, widely expressed with highest levels in kidney, liver, placenta, lung, leukocytes and small intestine and reduced expression in heart and skeletal muscle. Expressed abundantly in the CNS with highest levels in thalamus and medulla.

It localises to the endoplasmic reticulum membrane. Its subcellular location is the membrane. The protein resides in the cell membrane. Catalyzes intramembrane proteolysis of signal peptides that have been removed from precursors of secretory and membrane proteins, resulting in the release of the fragment from the ER membrane into the cytoplasm. Required to generate lymphocyte cell surface (HLA-E) epitopes derived from MHC class I signal peptides. May be necessary for the removal of the signal peptide that remains attached to the hepatitis C virus core protein after the initial proteolytic processing of the polyprotein. Involved in the intramembrane cleavage of the integral membrane protein PSEN1. Cleaves the integral membrane protein XBP1 isoform 1 in a DERL1/RNF139-dependent manner. May play a role in graft rejection. This chain is Signal peptide peptidase, found in Homo sapiens (Human).